Consider the following 157-residue polypeptide: MSNSKTVHLYTDGSCLGNPGPGGYGAVLEYGKHHKELSQGYRLTTNNRMEMLATIAGLRELKRSCHVILTTDSQYVKQGVEQWMHRWKQNGWRTSARKAVKNKDLWQQLDEEVNRHKVEWKWIKGHSGHKQNERCDELARDAATREPMLEDEGFGGE.

The region spanning asparagine 3–threonine 144 is the RNase H type-1 domain. The Mg(2+) site is built by aspartate 12, glutamate 50, aspartate 72, and aspartate 136.

This sequence belongs to the RNase H family. In terms of assembly, monomer. It depends on Mg(2+) as a cofactor.

The protein localises to the cytoplasm. The catalysed reaction is Endonucleolytic cleavage to 5'-phosphomonoester.. Functionally, endonuclease that specifically degrades the RNA of RNA-DNA hybrids. This chain is Ribonuclease H, found in Idiomarina loihiensis (strain ATCC BAA-735 / DSM 15497 / L2-TR).